A 455-amino-acid polypeptide reads, in one-letter code: Kynureninase (455 aa).

Pyridoxal 5'-phosphate-binding positions include Leu-94, Thr-95, 122–125 (FPSD), Asp-208, His-211, and Tyr-233. Lys-234 carries the post-translational modification N6-(pyridoxal phosphate)lysine. Residues Trp-275 and Asn-303 each coordinate pyridoxal 5'-phosphate.

This sequence belongs to the kynureninase family. Homodimer. Pyridoxal 5'-phosphate serves as cofactor.

It is found in the cytoplasm. The enzyme catalyses L-kynurenine + H2O = anthranilate + L-alanine + H(+). It catalyses the reaction 3-hydroxy-L-kynurenine + H2O = 3-hydroxyanthranilate + L-alanine + H(+). Its pathway is amino-acid degradation; L-kynurenine degradation; L-alanine and anthranilate from L-kynurenine: step 1/1. It participates in cofactor biosynthesis; NAD(+) biosynthesis; quinolinate from L-kynurenine: step 2/3. Its function is as follows. Catalyzes the cleavage of L-kynurenine (L-Kyn) and L-3-hydroxykynurenine (L-3OHKyn) into anthranilic acid (AA) and 3-hydroxyanthranilic acid (3-OHAA), respectively. This Vanderwaltozyma polyspora (strain ATCC 22028 / DSM 70294 / BCRC 21397 / CBS 2163 / NBRC 10782 / NRRL Y-8283 / UCD 57-17) (Kluyveromyces polysporus) protein is Kynureninase.